A 1082-amino-acid chain; its full sequence is Error-prone DNA polymerase (1082 aa).

The protein belongs to the DNA polymerase type-C family. DnaE2 subfamily.

It is found in the cytoplasm. It catalyses the reaction DNA(n) + a 2'-deoxyribonucleoside 5'-triphosphate = DNA(n+1) + diphosphate. Its function is as follows. DNA polymerase involved in damage-induced mutagenesis and translesion synthesis (TLS). It is not the major replicative DNA polymerase. This is Error-prone DNA polymerase from Xanthomonas campestris pv. campestris (strain 8004).